The sequence spans 324 residues: NADH-quinone oxidoreductase subunit H 2 (324 aa).

9 consecutive transmembrane segments (helical) span residues 1-21 (MIGM…LLVV), 77-97 (ILAP…VAFG), 109-129 (VMFL…GALA), 147-167 (LGYE…AGSL), 179-199 (VWFV…GVAA), 214-234 (LVAG…FLGE), 238-258 (VLLV…GPVW), 263-283 (LPGP…FIWI), and 298-318 (FAWK…GLIV).

Belongs to the complex I subunit 1 family. As to quaternary structure, NDH-1 is composed of 14 different subunits. Subunits NuoA, H, J, K, L, M, N constitute the membrane sector of the complex.

Its subcellular location is the cell inner membrane. The enzyme catalyses a quinone + NADH + 5 H(+)(in) = a quinol + NAD(+) + 4 H(+)(out). Its function is as follows. NDH-1 shuttles electrons from NADH, via FMN and iron-sulfur (Fe-S) centers, to quinones in the respiratory chain. The immediate electron acceptor for the enzyme in this species is believed to be ubiquinone. Couples the redox reaction to proton translocation (for every two electrons transferred, four hydrogen ions are translocated across the cytoplasmic membrane), and thus conserves the redox energy in a proton gradient. This subunit may bind ubiquinone. This Rhodopseudomonas palustris (strain BisB18) protein is NADH-quinone oxidoreductase subunit H 2.